We begin with the raw amino-acid sequence, 86 residues long: MQDELFETEKIPPKNTKNTKNAPKKSFEEHVHSLERAIDRLNDPNLSLKDGMDLYKTAMQELFLAQKLLENAYLEHEKLQTPDQKA.

The tract at residues 1–26 (MQDELFETEKIPPKNTKNTKNAPKKS) is disordered.

Belongs to the XseB family. As to quaternary structure, heterooligomer composed of large and small subunits.

It is found in the cytoplasm. It catalyses the reaction Exonucleolytic cleavage in either 5'- to 3'- or 3'- to 5'-direction to yield nucleoside 5'-phosphates.. In terms of biological role, bidirectionally degrades single-stranded DNA into large acid-insoluble oligonucleotides, which are then degraded further into small acid-soluble oligonucleotides. The protein is Exodeoxyribonuclease 7 small subunit of Helicobacter pylori (strain ATCC 700392 / 26695) (Campylobacter pylori).